We begin with the raw amino-acid sequence, 101 residues long: Small ribosomal subunit protein uS14 (101 aa).

The protein belongs to the universal ribosomal protein uS14 family. Part of the 30S ribosomal subunit. Contacts proteins S3 and S10.

In terms of biological role, binds 16S rRNA, required for the assembly of 30S particles and may also be responsible for determining the conformation of the 16S rRNA at the A site. The protein is Small ribosomal subunit protein uS14 of Stenotrophomonas maltophilia (strain K279a).